The following is a 202-amino-acid chain: Polyamine-modulated factor 1 (202 aa).

The segment covering 1–15 has biased composition (basic and acidic residues); it reads MAEVSRDSEAAERGP. The disordered stretch occupies residues 1 to 26; sequence MAEVSRDSEAAERGPEGSSPEAVPGD. A coiled-coil region spans residues 153–194; it reads EAKNQELADAVLAGRRQVEELQQQVRALQQTWQALHREQREL.

Component of the MIS12 complex composed of MIS12, DSN1, NSL1 and PMF1. Interacts with COPS7A. Interacts via its coiled-coil domain with the leucine-zipper domain of NFE2L2. The interaction with NFE2L2 is required for the transcriptional regulation of SSAT.

Its subcellular location is the nucleus. It localises to the chromosome. The protein resides in the centromere. It is found in the kinetochore. Functionally, part of the MIS12 complex which is required for normal chromosome alignment and segregation and for kinetochore formation during mitosis. May act as a cotranscription partner of NFE2L2 involved in regulation of polyamine-induced transcription of SSAT. The sequence is that of Polyamine-modulated factor 1 from Mus musculus (Mouse).